Reading from the N-terminus, the 79-residue chain is Conotoxin 8 (79 aa).

The first 22 residues, 1-22 (MKLTCVLIITVLFLTASQLITA), serve as a signal peptide directing secretion. The propeptide occupies 23-47 (DYSRGQRQYRAVRLGDEMRNFKGAR). 3 cysteine pairs are disulfide-bonded: C49–C62, C56–C67, and C61–C77.

Belongs to the conotoxin O1 superfamily. Expressed by the venom duct.

The protein resides in the secreted. The sequence is that of Conotoxin 8 from Conus vexillum (Flag cone).